Here is an 83-residue protein sequence, read N- to C-terminus: U1-theraphotoxin-Hs1f (83 aa).

A signal peptide spans 1–21 (MKVTLIAILTCAAVLVLHTTA). A propeptide spanning residues 22-48 (AEELEESQLMEVGMPDTELAAVDEERL) is cleaved from the precursor. 3 cysteine pairs are disulfide-bonded: Cys51–Cys64, Cys55–Cys75, and Cys69–Cys80.

This sequence belongs to the neurotoxin 12 (Hwtx-2) family. 02 (Hwtx-2) subfamily. As to expression, expressed by the venom gland.

It localises to the secreted. Functionally, lethal neurotoxin that blocks neuromuscular transmission. In Cyriopagopus schmidti (Chinese bird spider), this protein is U1-theraphotoxin-Hs1f.